The chain runs to 517 residues: MFSLQDLCRKHLFILPDVFGEHVLQRLGLYWKCHGSLQRIGDDHILIRRDLILSTNEALRMAGEEGNNEVVKLLLLWKGNLHYAIIGALQGDQYDLIHKYENQIGDFHLILPLIQDAKTFEKCHALERFCGVSCLLKHATKYNMLPILQTYQEELSMRVYLRETLFELACLWQRYDVLKWIEQTMHVYDLKVMFNIAISKRDLTMYSLGYILLFDRENTEATLLTQHLEKTAAKGLLHFVLETLKYGGNIDIVLSQAVKYNHRKLLDYFLRQLPRKHIEKFLLLAVQEKASKKTLNLLLSHLNYSVKRIKKLLRYVIEYESTLVIKILLKKRVNLIDAMLEKMVRYFSATKVKTIMDELSISPERVIKMAIQKMRTDIVIHTSYIWEDDLERLTRLKDMVYTIKYEHGKKMLIKVMHGIYKNLLYDEREKVMFHLAKLYVAQNAATQFRDICKDCYRLDLARFKPRFKQLMLDCLEIVTKKSCYSILEILEKHIISLFTMKVMTEEEKNLCLEILYK.

Belongs to the asfivirus MGF 505 family.

Plays a role in virus cell tropism, and may be required for efficient virus replication in macrophages. The polypeptide is Protein MGF 505-2R (African swine fever virus (isolate Warthog/Namibia/Wart80/1980) (ASFV)).